The primary structure comprises 428 residues: GTPase HflX (428 aa).

The Hflx-type G domain occupies 214–374 (PVVAIVGYTN…AIERELFKET (161 aa)). Residues 220–227 (GYTNAGKS), 245–249 (FATLD), 267–270 (DTVG), 333–336 (NKID), and 352–354 (SAK) each bind GTP. 2 residues coordinate Mg(2+): Ser227 and Thr247.

This sequence belongs to the TRAFAC class OBG-HflX-like GTPase superfamily. HflX GTPase family. Monomer. Associates with the 50S ribosomal subunit. It depends on Mg(2+) as a cofactor.

It localises to the cytoplasm. Functionally, GTPase that associates with the 50S ribosomal subunit and may have a role during protein synthesis or ribosome biogenesis. This is GTPase HflX from Caldanaerobacter subterraneus subsp. tengcongensis (strain DSM 15242 / JCM 11007 / NBRC 100824 / MB4) (Thermoanaerobacter tengcongensis).